The chain runs to 309 residues: NAD kinase (309 aa).

Asp-89 functions as the Proton acceptor in the catalytic mechanism. NAD(+) contacts are provided by residues 89 to 90 (DG), 163 to 164 (NE), His-174, Arg-191, Asp-193, and 204 to 209 (TAYALS).

This sequence belongs to the NAD kinase family. The cofactor is a divalent metal cation.

Its subcellular location is the cytoplasm. The catalysed reaction is NAD(+) + ATP = ADP + NADP(+) + H(+). Its function is as follows. Involved in the regulation of the intracellular balance of NAD and NADP, and is a key enzyme in the biosynthesis of NADP. Catalyzes specifically the phosphorylation on 2'-hydroxyl of the adenosine moiety of NAD to yield NADP. The chain is NAD kinase from Shewanella baltica (strain OS185).